Reading from the N-terminus, the 470-residue chain is FRIGIDA-like protein 1 (470 aa).

A coiled-coil region spans residues 336–369 (KDQNLESEFTQEKVEERVEELEKNKALRKRNTTN). A disordered region spans residues 355–400 (ELEKNKALRKRNTTNPPKQEPQQKGKKRTRDCKNGSQVPVPSQQLL). Residues 388–400 (NGSQVPVPSQQLL) show a composition bias toward polar residues.

This sequence belongs to the Frigida family. As to quaternary structure, component of the transcription activator complex FRI-C composed of FRI, FRL1, SUF4, FLX and FES1. Interacts with FRI and SUF4. Expressed during seed development and in dry seed. Preferentially expressed in the chalazal endosperm during early stages of seed development.

Its function is as follows. Required for FRI-mediated up-regulation of FLC transcripts, but not redundant with FRI and only partially redundant with FRL2. Required for the stabilization of the FRI-C complex. The chain is FRIGIDA-like protein 1 (FRL1) from Arabidopsis thaliana (Mouse-ear cress).